Here is a 471-residue protein sequence, read N- to C-terminus: UDP-N-acetylmuramate--L-alanine ligase (471 aa).

ATP is bound at residue 114 to 120 (GTHGKTT).

Belongs to the MurCDEF family.

The protein localises to the cytoplasm. It catalyses the reaction UDP-N-acetyl-alpha-D-muramate + L-alanine + ATP = UDP-N-acetyl-alpha-D-muramoyl-L-alanine + ADP + phosphate + H(+). The protein operates within cell wall biogenesis; peptidoglycan biosynthesis. Cell wall formation. This chain is UDP-N-acetylmuramate--L-alanine ligase, found in Rhizobium meliloti (strain 1021) (Ensifer meliloti).